The following is an 83-amino-acid chain: MSGNTGERPFADIITSIRYWVIHSITIPSLFIAGWLFVSTGLAYDVFGTPRPNEYFTADRQEVPLITGRFNSLEQLNEITKSL.

Residues 21 to 35 (VIHSITIPSLFIAGW) traverse the membrane as a helical segment. H23 lines the heme pocket.

The protein belongs to the PsbE/PsbF family. Heterodimer of an alpha subunit and a beta subunit. PSII is composed of 1 copy each of membrane proteins PsbA, PsbB, PsbC, PsbD, PsbE, PsbF, PsbH, PsbI, PsbJ, PsbK, PsbL, PsbM, PsbT, PsbX, PsbY, PsbZ, Psb30/Ycf12, at least 3 peripheral proteins of the oxygen-evolving complex and a large number of cofactors. It forms dimeric complexes. Heme b is required as a cofactor.

It localises to the plastid. Its subcellular location is the chloroplast thylakoid membrane. In terms of biological role, this b-type cytochrome is tightly associated with the reaction center of photosystem II (PSII). PSII is a light-driven water:plastoquinone oxidoreductase that uses light energy to abstract electrons from H(2)O, generating O(2) and a proton gradient subsequently used for ATP formation. It consists of a core antenna complex that captures photons, and an electron transfer chain that converts photonic excitation into a charge separation. This Chaetosphaeridium globosum (Charophycean green alga) protein is Cytochrome b559 subunit alpha.